Here is a 213-residue protein sequence, read N- to C-terminus: ATP synthase peripheral stalk subunit OSCP, mitochondrial (213 aa).

The N-terminal 23 residues, 1-23, are a transit peptide targeting the mitochondrion; that stretch reads MATPAVSGLSRQVRCFSTSVVRP. The short motif at 5–23 is the SIFI-degron element; it reads AVSGLSRQVRCFSTSVVRP. Lys-54, Lys-60, Lys-70, and Lys-73 each carry N6-acetyllysine. An N6-succinyllysine modification is found at Lys-90. An N6-acetyllysine; alternate mark is found at Lys-158 and Lys-162. Residues Lys-158 and Lys-162 each carry the N6-succinyllysine; alternate modification. Lys-172, Lys-176, and Lys-192 each carry N6-acetyllysine. At Lys-199 the chain carries N6-succinyllysine.

The protein belongs to the ATPase delta chain family. As to quaternary structure, component of the ATP synthase complex composed at least of ATP5F1A/subunit alpha, ATP5F1B/subunit beta, ATP5MC1/subunit c (homooctomer), MT-ATP6/subunit a, MT-ATP8/subunit 8, ATP5ME/subunit e, ATP5MF/subunit f, ATP5MG/subunit g, ATP5MK/subunit k, ATP5MJ/subunit j, ATP5F1C/subunit gamma, ATP5F1D/subunit delta, ATP5F1E/subunit epsilon, ATP5PF/subunit F6, ATP5PB/subunit b, ATP5PD/subunit d, ATP5PO/subunit OSCP. ATP synthase complex consists of a soluble F(1) head domain (subunits alpha(3) and beta(3)) - the catalytic core - and a membrane F(0) domain - the membrane proton channel (subunits c, a, 8, e, f, g, k and j). These two domains are linked by a central stalk (subunits gamma, delta, and epsilon) rotating inside the F1 region and a stationary peripheral stalk (subunits F6, b, d, and OSCP). In terms of processing, acetylation at Lys-162 decreases ATP production. Deacetylated by SIRT3. Post-translationally, in response to mitochondrial stress, the precursor protein is ubiquitinated by the SIFI complex in the cytoplasm before mitochondrial import, leading to its degradation. Within the SIFI complex, UBR4 initiates ubiquitin chain that are further elongated or branched by KCMF1.

It is found in the mitochondrion. It localises to the mitochondrion inner membrane. In terms of biological role, subunit OSCP, of the mitochondrial membrane ATP synthase complex (F(1)F(0) ATP synthase or Complex V) that produces ATP from ADP in the presence of a proton gradient across the membrane which is generated by electron transport complexes of the respiratory chain. ATP synthase complex consist of a soluble F(1) head domain - the catalytic core - and a membrane F(1) domain - the membrane proton channel. These two domains are linked by a central stalk rotating inside the F(1) region and a stationary peripheral stalk. During catalysis, ATP synthesis in the catalytic domain of F(1) is coupled via a rotary mechanism of the central stalk subunits to proton translocation. In vivo, can only synthesize ATP although its ATP hydrolase activity can be activated artificially in vitro. Part of the complex F(0) domain. Part of the complex F(0) domain and the peripheric stalk, which acts as a stator to hold the catalytic alpha(3)beta(3) subcomplex and subunit a/ATP6 static relative to the rotary elements. The sequence is that of ATP synthase peripheral stalk subunit OSCP, mitochondrial from Pongo abelii (Sumatran orangutan).